Reading from the N-terminus, the 235-residue chain is Small heat shock protein, chloroplastic (235 aa).

Disordered regions lie at residues 1-23 and 51-80; these read MAYTSLTSSPLVSNVSVGGTSKI and TGDNKDTSVDVHHSSAQGGNNQGTAVERRP. The segment covering 52 to 63 has biased composition (basic and acidic residues); that stretch reads GDNKDTSVDVHH. A compositionally biased stretch (polar residues) spans 64–74; it reads SSAQGGNNQGT. In terms of domain architecture, sHSP spans 126–235; that stretch reads SGTGEIRTPW…EKKVIDVQIN (110 aa).

The protein belongs to the small heat shock protein (HSP20) family. In terms of tissue distribution, in fruits, flowers, leaves, and stems.

It localises to the plastid. The protein localises to the chloroplast. In Solanum lycopersicum (Tomato), this protein is Small heat shock protein, chloroplastic (HSP21).